The sequence spans 120 residues: Large ribosomal subunit protein uL22 (120 aa).

It belongs to the universal ribosomal protein uL22 family. In terms of assembly, part of the 50S ribosomal subunit.

Its function is as follows. This protein binds specifically to 23S rRNA; its binding is stimulated by other ribosomal proteins, e.g. L4, L17, and L20. It is important during the early stages of 50S assembly. It makes multiple contacts with different domains of the 23S rRNA in the assembled 50S subunit and ribosome. In terms of biological role, the globular domain of the protein is located near the polypeptide exit tunnel on the outside of the subunit, while an extended beta-hairpin is found that lines the wall of the exit tunnel in the center of the 70S ribosome. The protein is Large ribosomal subunit protein uL22 of Oenococcus oeni (strain ATCC BAA-331 / PSU-1).